The following is a 160-amino-acid chain: Small ribosomal subunit protein uS17m (160 aa).

This sequence belongs to the universal ribosomal protein uS17 family. As to quaternary structure, component of the mitochondrial ribosome small subunit (28S) which comprises a 12S rRNA and about 30 distinct proteins.

It is found in the mitochondrion. The sequence is that of Small ribosomal subunit protein uS17m (mrps-17) from Caenorhabditis elegans.